Consider the following 491-residue polypeptide: Cytochrome P450 2B9 (491 aa).

Ser128 is subject to Phosphoserine; by PKA. Cys436 is a binding site for heme.

This sequence belongs to the cytochrome P450 family. Heme serves as cofactor.

It localises to the endoplasmic reticulum membrane. It is found in the microsome membrane. It catalyses the reaction an organic molecule + reduced [NADPH--hemoprotein reductase] + O2 = an alcohol + oxidized [NADPH--hemoprotein reductase] + H2O + H(+). Its function is as follows. Cytochromes P450 are a group of heme-thiolate monooxygenases. In liver microsomes, this enzyme is involved in an NADPH-dependent electron transport pathway. It oxidizes a variety of structurally unrelated compounds, including steroids, fatty acids, and xenobiotics. The chain is Cytochrome P450 2B9 (Cyp2b9) from Mus musculus (Mouse).